A 273-amino-acid polypeptide reads, in one-letter code: Histone H1.2 (273 aa).

Positions 1 to 63 (MSIEEENVPT…TKKKTTSSHP (63 aa)) are disordered. Serine 2 is modified (N-acetylserine). At serine 14 the chain carries Phosphoserine. Residues 33–59 (GKSKKTTTAKATKKPVKAAAPTKKKTT) are compositionally biased toward basic residues. The H15 domain occupies 61–130 (SHPTYEEMIK…KVKASFKIPS (70 aa)). Residues lysine 156 and lysine 165 each participate in a glycyl lysine isopeptide (Lys-Gly) (interchain with G-Cter in ubiquitin) cross-link. Composition is skewed to low complexity over residues 193–216 (KVTA…VAAK) and 237–256 (KKVA…PAKS). The tract at residues 193 to 273 (KVTAAKPKSK…KRASTRKAKK (81 aa)) is disordered. Residues 257 to 273 (VKVKSPAKRASTRKAKK) are compositionally biased toward basic residues.

Belongs to the histone H1/H5 family.

Its subcellular location is the nucleus. It is found in the chromosome. Functionally, histones H1 are necessary for the condensation of nucleosome chains into higher-order structures. This is Histone H1.2 from Arabidopsis thaliana (Mouse-ear cress).